The chain runs to 360 residues: Phospho-N-acetylmuramoyl-pentapeptide-transferase (360 aa).

10 consecutive transmembrane segments (helical) span residues 21–41 (YITVRAILALLTALLVSLWIG), 73–93 (TMGGVMILFAITVSTLLWANL), 94–114 (ANPYVWFSLFVLLGYGAIGFV), 132–152 (WKYFWLSVIALVAAFGMYAIG), 168–188 (IMPQLGLFYIILTYFVIVGTS), 199–219 (GLAIMPTVLVAGAFALIAWAT), 235–255 (FSAELVVFCTAIVGAGLGFLW), 263–283 (VFMGDVGSLALGGALGVVAVL), 288–308 (FLLVIMGGVFVVETLSVILQV), and 338–358 (VIVRFWIISLMLVLVGLVTLK).

This sequence belongs to the glycosyltransferase 4 family. MraY subfamily. It depends on Mg(2+) as a cofactor.

Its subcellular location is the cell inner membrane. It carries out the reaction UDP-N-acetyl-alpha-D-muramoyl-L-alanyl-gamma-D-glutamyl-meso-2,6-diaminopimeloyl-D-alanyl-D-alanine + di-trans,octa-cis-undecaprenyl phosphate = di-trans,octa-cis-undecaprenyl diphospho-N-acetyl-alpha-D-muramoyl-L-alanyl-D-glutamyl-meso-2,6-diaminopimeloyl-D-alanyl-D-alanine + UMP. It functions in the pathway cell wall biogenesis; peptidoglycan biosynthesis. Functionally, catalyzes the initial step of the lipid cycle reactions in the biosynthesis of the cell wall peptidoglycan: transfers peptidoglycan precursor phospho-MurNAc-pentapeptide from UDP-MurNAc-pentapeptide onto the lipid carrier undecaprenyl phosphate, yielding undecaprenyl-pyrophosphoryl-MurNAc-pentapeptide, known as lipid I. This Pasteurella multocida (strain Pm70) protein is Phospho-N-acetylmuramoyl-pentapeptide-transferase.